Consider the following 201-residue polypeptide: Basic helix-loop-helix transcription factor scleraxis (201 aa).

2 disordered regions span residues 1–92 and 148–177; these read MSFA…NSVN and AFFH…QPKQ. Residues 59–69 are compositionally biased toward gly residues; it reads RRAGGGGPGGR. The span at 70-88 shows a compositional bias: basic and acidic residues; that stretch reads PGREPRQRHTANARERDRT. A bHLH domain is found at 75-127; it reads RQRHTANARERDRTNSVNTAFTALRTLIPTEPADRKLSKIETLRLASSYISHL. Residues 157–167 show a composition bias toward pro residues; it reads SPPPPPPPPPA.

In terms of assembly, efficient DNA binding requires dimerization with another bHLH protein. Dimerizes and binds the E-box consensus sequence with E12.

Its subcellular location is the nucleus. Plays an early essential role in mesoderm formation, as well as a later role in formation of somite-derived chondrogenic lineages. In Homo sapiens (Human), this protein is Basic helix-loop-helix transcription factor scleraxis (SCX).